Reading from the N-terminus, the 71-residue chain is Beta-defensin 2 (71 aa).

Positions 1-20 are cleaved as a signal peptide; it reads MRTLCSLLLICCLLFSYTTP. 3 disulfides stabilise this stretch: C37/C66, C44/C59, and C49/C67.

The protein belongs to the beta-defensin family. As to expression, kidney, uterus and to a lesser extent in heart.

The protein resides in the secreted. In terms of biological role, has bactericidal activity. In Mus musculus (Mouse), this protein is Beta-defensin 2 (Defb2).